The following is a 306-amino-acid chain: Acetyl-coenzyme A carboxylase carboxyl transferase subunit beta (306 aa).

Residues 25 to 294 (VWTKCDSCGQ…PSPDAPREAV (270 aa)) form the CoA carboxyltransferase N-terminal domain. Positions 29, 32, 48, and 51 each coordinate Zn(2+). The C4-type zinc finger occupies 29 to 51 (CDSCGQVLYRAELERNLEVCPKC). The segment at 286–306 (SPDAPREAVVVPPVPDQDHEA) is disordered.

Belongs to the AccD/PCCB family. In terms of assembly, acetyl-CoA carboxylase is a heterohexamer composed of biotin carboxyl carrier protein (AccB), biotin carboxylase (AccC) and two subunits each of ACCase subunit alpha (AccA) and ACCase subunit beta (AccD). The cofactor is Zn(2+).

The protein localises to the cytoplasm. The catalysed reaction is N(6)-carboxybiotinyl-L-lysyl-[protein] + acetyl-CoA = N(6)-biotinyl-L-lysyl-[protein] + malonyl-CoA. The protein operates within lipid metabolism; malonyl-CoA biosynthesis; malonyl-CoA from acetyl-CoA: step 1/1. Its function is as follows. Component of the acetyl coenzyme A carboxylase (ACC) complex. Biotin carboxylase (BC) catalyzes the carboxylation of biotin on its carrier protein (BCCP) and then the CO(2) group is transferred by the transcarboxylase to acetyl-CoA to form malonyl-CoA. This chain is Acetyl-coenzyme A carboxylase carboxyl transferase subunit beta, found in Cronobacter sakazakii (strain ATCC BAA-894) (Enterobacter sakazakii).